The sequence spans 186 residues: Akirin-1 (186 aa).

The disordered stretch occupies residues 1 to 64 (MACGATLKRS…PLPQLGGDRR (64 aa)). The short motif at 22–27 (PKRRRC) is the Nuclear localization signal element. Residues 49 to 60 (QQGQQQPLPQLG) are compositionally biased toward low complexity. The SYVS motif motif lies at 183 to 186 (SYVS).

The protein belongs to the akirin family.

Its subcellular location is the nucleus. Molecular adapter that acts as a bridge between proteins, and which is involved skeletal muscle development. Functions as a signal transducer for MSTN during skeletal muscle regeneration and myogenesis. This is Akirin-1 from Xenopus tropicalis (Western clawed frog).